An 879-amino-acid polypeptide reads, in one-letter code: Metabotropic glutamate receptor 3 (879 aa).

The signal sequence occupies residues 1 to 22; it reads MKMLTRLQVLTLALFSKGFLLS. Residues 23-576 are Extracellular-facing; it reads LGDHNFLRRE…EDYIRWEDAW (554 aa). Cys-57 and Cys-99 are joined by a disulfide. L-glutamate contacts are provided by residues Ser-151 and 172 to 174; that span reads AST. Asn-209 carries an N-linked (GlcNAc...) asparagine glycan. Residue Tyr-222 coordinates L-glutamate. 7 disulfide bridges follow: Cys-240–Cys-527, Cys-361–Cys-373, Cys-412–Cys-419, Cys-509–Cys-528, Cys-513–Cys-531, Cys-534–Cys-546, and Cys-549–Cys-562. An N-linked (GlcNAc...) asparagine glycan is attached at Asn-292. L-glutamate is bound at residue Asp-301. L-glutamate is bound at residue Lys-389. Asn-414 and Asn-439 each carry an N-linked (GlcNAc...) asparagine glycan. The helical transmembrane segment at 577–599 threads the bilayer; sequence VIGPVTIACLGFMCTCMVVTVFI. Residues 600 to 613 are Cytoplasmic-facing; sequence KHNNTPLVKASGRE. The helical transmembrane segment at 614–634 threads the bilayer; that stretch reads LCYILLFGVGLSYCMTFFFIA. At 635-645 the chain is on the extracellular side; that stretch reads KPSPVICALRR. The chain crosses the membrane as a helical span at residues 646-664; the sequence is LGLGSSFAICYSALLTKTN. The Cytoplasmic portion of the chain corresponds to 665 to 688; that stretch reads CIARIFDGVKNGAQRPKFISPSSQ. A helical transmembrane segment spans residues 689–709; it reads VFICLGLILVQIVMVSVWLIL. The Extracellular segment spans residues 710-734; sequence EAPGTRRYTLAEKRETVILKCNVKD. The helical transmembrane segment at 735-756 threads the bilayer; the sequence is SSMLISLTYDVILVILCTVYAF. The Cytoplasmic portion of the chain corresponds to 757–769; sequence KTRKCPENFNEAK. The helical transmembrane segment at 770–792 threads the bilayer; sequence FIGFTMYTTCIIWLAFLPIFYVT. Residues 793-802 lie on the Extracellular side of the membrane; sequence SSDYRVQTTT. A helical transmembrane segment spans residues 803-828; the sequence is MCISVSLSGFVVLGCLFAPKVHIILF. Residues 829-879 lie on the Cytoplasmic side of the membrane; the sequence is QPQKNVVTHRLHLNRFSVSGTGTTYSQSSASTYVPTVCNGREVLDSTTSSL.

Belongs to the G-protein coupled receptor 3 family. As to quaternary structure, interacts with TAMALIN.

The protein resides in the cell membrane. G-protein coupled receptor for glutamate. Ligand binding causes a conformation change that triggers signaling via guanine nucleotide-binding proteins (G proteins) and modulates the activity of down-stream effectors. Signaling inhibits adenylate cyclase activity. The polypeptide is Metabotropic glutamate receptor 3 (GRM3) (Pongo abelii (Sumatran orangutan)).